We begin with the raw amino-acid sequence, 302 residues long: N-acetylmuramic acid 6-phosphate etherase (302 aa).

The 164-residue stretch at 58–221 (IGESFLNGGR…STGAMVKTGK (164 aa)) folds into the SIS domain. The active-site Proton donor is E86. E117 is a catalytic residue.

Belongs to the GCKR-like family. MurNAc-6-P etherase subfamily. In terms of assembly, homodimer.

The catalysed reaction is N-acetyl-D-muramate 6-phosphate + H2O = N-acetyl-D-glucosamine 6-phosphate + (R)-lactate. The protein operates within amino-sugar metabolism; N-acetylmuramate degradation. In terms of biological role, specifically catalyzes the cleavage of the D-lactyl ether substituent of MurNAc 6-phosphate, producing GlcNAc 6-phosphate and D-lactate. This chain is N-acetylmuramic acid 6-phosphate etherase, found in Clostridium botulinum (strain Okra / Type B1).